Consider the following 249-residue polypeptide: tRNA pseudouridine synthase A (249 aa).

Catalysis depends on Asp-52, which acts as the Nucleophile. Residue Tyr-111 coordinates substrate.

Belongs to the tRNA pseudouridine synthase TruA family. As to quaternary structure, homodimer.

The catalysed reaction is uridine(38/39/40) in tRNA = pseudouridine(38/39/40) in tRNA. In terms of biological role, formation of pseudouridine at positions 38, 39 and 40 in the anticodon stem and loop of transfer RNAs. In Brachyspira hyodysenteriae (strain ATCC 49526 / WA1), this protein is tRNA pseudouridine synthase A.